We begin with the raw amino-acid sequence, 810 residues long: RING finger protein unkempt homolog (810 aa).

Residues 1 to 24 are disordered; that stretch reads MSKGPGPGGSAASSAPPAATAQVL. A compositionally biased stretch (low complexity) spans 10–19; that stretch reads SAASSAPPAA. C3H1-type zinc fingers lie at residues 84–113, 124–154, 215–241, 251–285, and 293–321; these read YSPDVYCTKYDEATGLCPEGDECPFLHRTT, YYKTGICIHETDSKGNCTKNGLHCAFAHGPH, NYKTEPCKKPPRLCRQGYACPYYHNSK, KYRSSPCPNVKHGDEWGDPGKCENGDACQYCHTRT, and IYKSTKCNDMQQAGSCPRGPFCAFAHIEP. The disordered stretch occupies residues 239–265; the sequence is NSKDRRRSPRKHKYRSSPCPNVKHGDE. Ser-240 carries the phosphoserine modification. Basic residues predominate over residues 241–253; sequence KDRRRSPRKHKYR. Phosphoserine occurs at positions 374, 378, 385, and 394. The disordered stretch occupies residues 478-497; sequence TSSLAATPPSPAGTNSTPGM. At Ser-631 the chain carries Phosphoserine. A coiled-coil region spans residues 643 to 727; sequence GAAELARLRQ…ERLHTVPEAQ (85 aa). The RING-type; degenerate zinc finger occupies 766 to 801; it reads SVKCLKCQEQTRAVLPCQHAVLCELCAEGSECPVCQ.

Belongs to the unkempt family.

The protein localises to the cytoplasm. Sequence-specific RNA-binding protein which plays an important role in the establishment and maintenance of the early morphology of cortical neurons during embryonic development. Acts as a translation repressor and controls a translationally regulated cell morphology program to ensure proper structuring of the nervous system. Translational control depends on recognition of its binding element within target mRNAs which consists of a mandatory UAG trimer upstream of a U/A-rich motif. Associated with polysomes. This chain is RING finger protein unkempt homolog (Unk), found in Mus musculus (Mouse).